Here is an 87-residue protein sequence, read N- to C-terminus: MLVLQLAVLVTAVYAFVHAALQRPDAYTAAEKLTKPVWLVILGAAVSLTSILGFVFGVLGIVIAACAAGVYLVDVRPKLLDIQGKSR.

Positions 1–19 (MLVLQLAVLVTAVYAFVHA) are cleaved as a signal peptide. Residues 51 to 71 (ILGFVFGVLGIVIAACAAGVY) form a helical membrane-spanning segment.

To M.tuberculosis Rv0476.

Its subcellular location is the membrane. This is an uncharacterized protein from Mycobacterium leprae (strain TN).